A 233-amino-acid chain; its full sequence is Lipoprotein-releasing system ATP-binding protein LolD (233 aa).

Residues 6 to 233 enclose the ABC transporter domain; it reads LQCDNLCKRY…TAELSLMGAE (228 aa). 42 to 49 provides a ligand contact to ATP; it reads GSSGSGKS.

The protein belongs to the ABC transporter superfamily. Lipoprotein translocase (TC 3.A.1.125) family. The complex is composed of two ATP-binding proteins (LolD) and two transmembrane proteins (LolC and LolE).

It localises to the cell inner membrane. Functionally, part of the ABC transporter complex LolCDE involved in the translocation of mature outer membrane-directed lipoproteins, from the inner membrane to the periplasmic chaperone, LolA. Responsible for the formation of the LolA-lipoprotein complex in an ATP-dependent manner. The chain is Lipoprotein-releasing system ATP-binding protein LolD from Salmonella choleraesuis (strain SC-B67).